Here is a 506-residue protein sequence, read N- to C-terminus: Sodium-coupled neutral amino acid symporter 2 (506 aa).

Residues 1-23 (MKKAEMGRFNISPDEDSSSYSSN) form a disordered region. The Cytoplasmic portion of the chain corresponds to 1–76 (MKKAEMGRFN…HPGTTSFGMS (76 aa)). Positions 1-96 (MKKAEMGRFN…SGILGLSYAM (96 aa)) are regulates protein turnover upon amino acid deprivation. Phosphoserine occurs at positions 12, 21, 22, and 55. A helical transmembrane segment spans residues 77 to 96 (VFNLSNAIVGSGILGLSYAM). Residue N82 coordinates Na(+). The Extracellular segment spans residues 97-102 (ANTGIA). The chain crosses the membrane as a helical span at residues 103–123 (LFIILLTFVSIFSLYSVHLLL). The Cytoplasmic segment spans residues 124–158 (KTANEGGSLLYEQLGHKAFGMVGKLTASGSITMQN). A helical transmembrane segment spans residues 159–177 (IGAMSSYLFIVKYELPLVI). Residues 178 to 188 (QALMNIEDTNG) are Extracellular-facing. A helical transmembrane segment spans residues 189–209 (LWYLNGDYLVLLVSLVLILPL). At 210 to 217 (SLLRNLGY) the chain is on the cytoplasmic side. The chain crosses the membrane as a helical span at residues 218-238 (LGYTSGLSLLCMMFFLIVVIF). At 239 to 292 (KKFQISCPAEIAFLVNETVNSSLTQPATFLPDMGFNRTESDSCQPRYFIFNSQT) the chain is on the extracellular side. C245 and C281 are oxidised to a cystine. Residues N258 and N274 are each glycosylated (N-linked (GlcNAc...) asparagine). The helical transmembrane segment at 293–313 (VYAVPILTFSFVCHPAILPIY) threads the bilayer. The Cytoplasmic segment spans residues 314–329 (EELKGRSRRRMMNVSK). A helical membrane pass occupies residues 330-350 (ISFFAMFLMYLLAALFGYLTF). Residues 351–371 (YGHVESELLHTYSSVMETDIL) are Extracellular-facing. Residues 372–392 (LLIVRLAVLVAVTLTVPVVIF) form a helical membrane-spanning segment. Na(+) is bound at residue T386. Residues 393 to 413 (PIRSSITHLLCASKEFSWWRH) lie on the Cytoplasmic side of the membrane. A helical membrane pass occupies residues 414 to 434 (SVITVSILVFTNLLVIFVPNI). Residues 435-436 (RD) are Extracellular-facing. The helical transmembrane segment at 437 to 457 (IFGFIGASAAAMLIFILPSAF) threads the bilayer. Residues 458-472 (YIKLVKKEPMKSVQK) are Cytoplasmic-facing. The chain crosses the membrane as a helical span at residues 473-495 (IGAMFFLLSGIVVMTGSMALIVL). The Extracellular portion of the chain corresponds to 496-506 (DWVHNAPGGGH).

Belongs to the amino acid/polyamine transporter 2 family. Polyubiquitination by NEDD4L regulates the degradation and the activity of SLC38A2.

Its subcellular location is the cell membrane. It carries out the reaction L-alanine(in) + Na(+)(in) = L-alanine(out) + Na(+)(out). The enzyme catalyses glycine(in) + Na(+)(in) = glycine(out) + Na(+)(out). The catalysed reaction is L-serine(in) + Na(+)(in) = L-serine(out) + Na(+)(out). It catalyses the reaction L-proline(in) + Na(+)(in) = L-proline(out) + Na(+)(out). It carries out the reaction L-methionine(in) + Na(+)(in) = L-methionine(out) + Na(+)(out). The enzyme catalyses L-histidine(in) + Na(+)(in) = L-histidine(out) + Na(+)(out). The catalysed reaction is L-asparagine(in) + Na(+)(in) = L-asparagine(out) + Na(+)(out). It catalyses the reaction L-glutamine(in) + Na(+)(in) = L-glutamine(out) + Na(+)(out). It carries out the reaction L-threonine(in) + Na(+)(in) = L-threonine(out) + Na(+)(out). The enzyme catalyses L-leucine(in) + Na(+)(in) = L-leucine(out) + Na(+)(out). The catalysed reaction is L-phenylalanine(in) + Na(+)(in) = L-phenylalanine(out) + Na(+)(out). Its activity is regulated as follows. Inhibited by N-methyl-D-glucamine. Inhibited by choline. Allosteric regulation of sodium ions binding by pH. Its function is as follows. Symporter that cotransports neutral amino acids and sodium ions from the extracellular to the intracellular side of the cell membrane. The transport is pH-sensitive, Li(+)-intolerant, electrogenic, driven by the Na(+) electrochemical gradient and cotransports of neutral amino acids and sodium ions with a stoichiometry of 1:1. May function in the transport of amino acids at the blood-brain barrier. May function in the transport of amino acids in the supply of maternal nutrients to the fetus through the placenta. Maintains a key metabolic glutamine/glutamate balance underpinning retrograde signaling by dendritic release of the neurotransmitter glutamate. Transports L-proline in differentiating osteoblasts for the efficient synthesis of proline-enriched proteins and provides proline essential for osteoblast differentiation and bone formation during bone development. The polypeptide is Sodium-coupled neutral amino acid symporter 2 (Bos taurus (Bovine)).